We begin with the raw amino-acid sequence, 351 residues long: Phosphoribosylformylglycinamidine cyclo-ligase (351 aa).

Belongs to the AIR synthase family.

The protein resides in the cytoplasm. The enzyme catalyses 2-formamido-N(1)-(5-O-phospho-beta-D-ribosyl)acetamidine + ATP = 5-amino-1-(5-phospho-beta-D-ribosyl)imidazole + ADP + phosphate + H(+). The protein operates within purine metabolism; IMP biosynthesis via de novo pathway; 5-amino-1-(5-phospho-D-ribosyl)imidazole from N(2)-formyl-N(1)-(5-phospho-D-ribosyl)glycinamide: step 2/2. This chain is Phosphoribosylformylglycinamidine cyclo-ligase, found in Xylella fastidiosa (strain 9a5c).